The following is a 131-amino-acid chain: DNA-directed RNA polymerase subunit Rpo8 (131 aa).

The protein belongs to the archaeal Rpo8 RNA polymerase subunit family. As to quaternary structure, part of the 13-subunit RNA polymerase complex. Interacts with Rpo1N on the periphery of the clamp head.

The protein localises to the cytoplasm. The enzyme catalyses RNA(n) + a ribonucleoside 5'-triphosphate = RNA(n+1) + diphosphate. DNA-dependent RNA polymerase (RNAP) catalyzes the transcription of DNA into RNA using the four ribonucleoside triphosphates as substrates. The sequence is that of DNA-directed RNA polymerase subunit Rpo8 from Saccharolobus shibatae (strain ATCC 51178 / DSM 5389 / JCM 8931 / NBRC 15437 / B12) (Sulfolobus shibatae).